The following is a 504-amino-acid chain: MSKEDNVINSFEEQANELMKERFQKLKELQSNGKDPFDVYKVERTHTSKEVKDNYEDLEGKTVTVAGRLMSKRVHGKAGFSDIHDRYGKIQLYIKINDVGEEKLKEYKTFDIGDIISVTGTVFKTKTGETSIHITDFQLVCKSLRPLPEKWHGLKDPDLRYRQRYVDLIINQDVRDTFIKRTAIIKSMREFLDNRGFLEVETPILSPIAGGAAAKPFITHHNALDIDMYLRIATELYLKRLIVGGFEKVYEIGKNFRNEGIDIRHNPEFTAIELYEAYADYNDMMEITENMIAYICEKVLGTTKVEYEGAEIDFTPPWRRLTMVDAVKEYAGVDFNIIKNDIEARTIAKEKHIEFKKELKDCTKGDVLIGLFEEFCEDKLMQPTFICDYPVENSPLTKKKRGNEAFTERFEGFVFGREVCNAYSELNDSIVQKERFMQQLKERELGDDEAYMMDDDFITSLEVGMPPTGGLGIGIDRLIMFLTDTHSIRDVILFPTMKPQPNNQ.

Glu-411 and Glu-418 together coordinate Mg(2+).

This sequence belongs to the class-II aminoacyl-tRNA synthetase family. In terms of assembly, homodimer. It depends on Mg(2+) as a cofactor.

Its subcellular location is the cytoplasm. It carries out the reaction tRNA(Lys) + L-lysine + ATP = L-lysyl-tRNA(Lys) + AMP + diphosphate. The protein is Lysine--tRNA ligase of Clostridium botulinum (strain Okra / Type B1).